Consider the following 237-residue polypeptide: Phosphoadenosine 5'-phosphosulfate reductase (237 aa).

The active-site Nucleophile; cysteine thiosulfonate intermediate is cysteine 231.

Belongs to the PAPS reductase family. CysH subfamily.

Its subcellular location is the cytoplasm. The enzyme catalyses [thioredoxin]-disulfide + sulfite + adenosine 3',5'-bisphosphate + 2 H(+) = [thioredoxin]-dithiol + 3'-phosphoadenylyl sulfate. The protein operates within sulfur metabolism; hydrogen sulfide biosynthesis; sulfite from sulfate: step 3/3. Catalyzes the formation of sulfite from phosphoadenosine 5'-phosphosulfate (PAPS) using thioredoxin as an electron donor. This chain is Phosphoadenosine 5'-phosphosulfate reductase, found in Xylella fastidiosa (strain M12).